A 114-amino-acid polypeptide reads, in one-letter code: Protein U68 (114 aa).

Belongs to the herpesviridae UL96 family.

The chain is Protein U68 (U68) from Human herpesvirus 6A (strain Uganda-1102) (HHV-6 variant A).